We begin with the raw amino-acid sequence, 476 residues long: WD repeat, SAM and U-box domain-containing protein 1 (476 aa).

WD repeat units lie at residues 10 to 47 (DHGD…ELPH), 52 to 91 (FHTY…MLAV), 95 to 134 (PSGS…LYRC), 137 to 176 (VKDG…LHSE), 178 to 228 (AHDL…LGFE), 237 to 276 (GHCA…ILHT), and 279 to 318 (QHTR…LCQA). The region spanning 332–396 (WSEEDVSTWL…LRKIEELRTK (65 aa)) is the SAM domain. The U-box domain occupies 403-476 (GIPDEFICPI…INRWLETHQK (74 aa)). T458 is modified (phosphothreonine).

This chain is WD repeat, SAM and U-box domain-containing protein 1 (WDSUB1), found in Homo sapiens (Human).